Consider the following 181-residue polypeptide: PLAT domain-containing protein 1 (181 aa).

The signal sequence occupies residues 1–14 (MARRDVLLPFLLLL). Ala15 bears the N-acetylalanine mark. The PLAT domain maps to 29-156 (CVYTFYLRTG…SPYELTAVRN (128 aa)).

In terms of tissue distribution, expressed in root tips, pericycle cells, lateral root primordia, stomata, leaf vasculature, hydathodes and floral organs.

The protein resides in the endoplasmic reticulum. The protein localises to the plastid. It localises to the chloroplast. It is found in the plastoglobule. In terms of biological role, positive regulator of abiotic stress tolerance involved in the regulation of plant growth. May be a downstream target of the abscisic acid (ABA) signaling pathway. The chain is PLAT domain-containing protein 1 from Arabidopsis thaliana (Mouse-ear cress).